A 138-amino-acid polypeptide reads, in one-letter code: MLQPKRTKFRKPHKVSYEGKAKGNKQVDFGEFGLMALEGAWIDARQIESARIAISKRLLKTGKMWIRIFPHMSLTKKPLEVRMGSGKGSPEKWVAVVKAGTVMFEIANVSEELMCEALRAAGNKLPIKVKIVKKGEAN.

This sequence belongs to the universal ribosomal protein uL16 family. As to quaternary structure, part of the 50S ribosomal subunit.

Functionally, binds 23S rRNA and is also seen to make contacts with the A and possibly P site tRNAs. The sequence is that of Large ribosomal subunit protein uL16 from Ureaplasma parvum serovar 3 (strain ATCC 27815 / 27 / NCTC 11736).